A 144-amino-acid chain; its full sequence is Nucleoside diphosphate kinase (144 aa).

ATP is bound by residues lysine 9, phenylalanine 57, arginine 85, threonine 91, arginine 102, and asparagine 112. Residue histidine 120 is the Pros-phosphohistidine intermediate of the active site.

This sequence belongs to the NDK family. In terms of assembly, homotetramer. Requires Mg(2+) as cofactor.

The protein localises to the cytoplasm. It carries out the reaction a 2'-deoxyribonucleoside 5'-diphosphate + ATP = a 2'-deoxyribonucleoside 5'-triphosphate + ADP. The catalysed reaction is a ribonucleoside 5'-diphosphate + ATP = a ribonucleoside 5'-triphosphate + ADP. Its function is as follows. Major role in the synthesis of nucleoside triphosphates other than ATP. The ATP gamma phosphate is transferred to the NDP beta phosphate via a ping-pong mechanism, using a phosphorylated active-site intermediate. The chain is Nucleoside diphosphate kinase from Streptococcus uberis (strain ATCC BAA-854 / 0140J).